A 258-amino-acid polypeptide reads, in one-letter code: UPF0246 protein NTHI1156 (258 aa).

This sequence belongs to the UPF0246 family.

The polypeptide is UPF0246 protein NTHI1156 (Haemophilus influenzae (strain 86-028NP)).